The following is a 164-amino-acid chain: NADPH-dependent 7-cyano-7-deazaguanine reductase (164 aa).

Catalysis depends on Cys-55, which acts as the Thioimide intermediate. Asp-62 (proton donor) is an active-site residue. Residues 77 to 79 and 96 to 97 contribute to the substrate site; these read VES and HE.

This sequence belongs to the GTP cyclohydrolase I family. QueF type 1 subfamily.

Its subcellular location is the cytoplasm. It catalyses the reaction 7-aminomethyl-7-carbaguanine + 2 NADP(+) = 7-cyano-7-deazaguanine + 2 NADPH + 3 H(+). It participates in tRNA modification; tRNA-queuosine biosynthesis. Functionally, catalyzes the NADPH-dependent reduction of 7-cyano-7-deazaguanine (preQ0) to 7-aminomethyl-7-deazaguanine (preQ1). This Bacillus velezensis (strain DSM 23117 / BGSC 10A6 / LMG 26770 / FZB42) (Bacillus amyloliquefaciens subsp. plantarum) protein is NADPH-dependent 7-cyano-7-deazaguanine reductase.